Reading from the N-terminus, the 122-residue chain is Large ribosomal subunit protein uL14 (122 aa).

Belongs to the universal ribosomal protein uL14 family. Part of the 50S ribosomal subunit. Forms a cluster with proteins L3 and L19. In the 70S ribosome, L14 and L19 interact and together make contacts with the 16S rRNA in bridges B5 and B8.

In terms of biological role, binds to 23S rRNA. Forms part of two intersubunit bridges in the 70S ribosome. This chain is Large ribosomal subunit protein uL14, found in Picosynechococcus sp. (strain ATCC 27264 / PCC 7002 / PR-6) (Agmenellum quadruplicatum).